A 205-amino-acid chain; its full sequence is Adenylyl-sulfate kinase (205 aa).

31–38 serves as a coordination point for ATP; sequence GLSGSGKS. Catalysis depends on serine 105, which acts as the Phosphoserine intermediate.

This sequence belongs to the APS kinase family.

It catalyses the reaction adenosine 5'-phosphosulfate + ATP = 3'-phosphoadenylyl sulfate + ADP + H(+). It functions in the pathway sulfur metabolism; hydrogen sulfide biosynthesis; sulfite from sulfate: step 2/3. Catalyzes the synthesis of activated sulfate. The chain is Adenylyl-sulfate kinase from Shewanella halifaxensis (strain HAW-EB4).